A 479-amino-acid polypeptide reads, in one-letter code: Proline--tRNA ligase (479 aa).

The protein belongs to the class-II aminoacyl-tRNA synthetase family. ProS type 3 subfamily. In terms of assembly, homodimer.

It localises to the cytoplasm. The catalysed reaction is tRNA(Pro) + L-proline + ATP = L-prolyl-tRNA(Pro) + AMP + diphosphate. Its function is as follows. Catalyzes the attachment of proline to tRNA(Pro) in a two-step reaction: proline is first activated by ATP to form Pro-AMP and then transferred to the acceptor end of tRNA(Pro). The protein is Proline--tRNA ligase of Mesomycoplasma hyopneumoniae (strain 7448) (Mycoplasma hyopneumoniae).